A 672-amino-acid polypeptide reads, in one-letter code: tRNA 5-methylaminomethyl-2-thiouridine biosynthesis bifunctional protein MnmC (672 aa).

Residues 1 to 243 form a tRNA (mnm(5)s(2)U34)-methyltransferase region; that stretch reads MTSITHAELG…KREMIAGCME (243 aa). Residues 269–672 are FAD-dependent cmnm(5)s(2)U34 oxidoreductase; that stretch reads IGGGIASAAL…LRKGKAITEL (404 aa).

In the N-terminal section; belongs to the methyltransferase superfamily. tRNA (mnm(5)s(2)U34)-methyltransferase family. The protein in the C-terminal section; belongs to the DAO family. FAD is required as a cofactor.

It is found in the cytoplasm. It carries out the reaction 5-aminomethyl-2-thiouridine(34) in tRNA + S-adenosyl-L-methionine = 5-methylaminomethyl-2-thiouridine(34) in tRNA + S-adenosyl-L-homocysteine + H(+). Its function is as follows. Catalyzes the last two steps in the biosynthesis of 5-methylaminomethyl-2-thiouridine (mnm(5)s(2)U) at the wobble position (U34) in tRNA. Catalyzes the FAD-dependent demodification of cmnm(5)s(2)U34 to nm(5)s(2)U34, followed by the transfer of a methyl group from S-adenosyl-L-methionine to nm(5)s(2)U34, to form mnm(5)s(2)U34. This is tRNA 5-methylaminomethyl-2-thiouridine biosynthesis bifunctional protein MnmC from Vibrio vulnificus (strain YJ016).